Reading from the N-terminus, the 273-residue chain is Histidine racemase (273 aa).

C72 serves as the catalytic Proton acceptor. Residue C211 is the Proton donor of the active site.

The protein belongs to the histidine racemase family. As to quaternary structure, homodimer.

It is found in the cytoplasm. It catalyses the reaction L-histidine = D-histidine. Isomerase that catalyzes the conversion of L-histidine to D-histidine. Functions the biosynthesis of the metallophore staphylopine, which is involved in the acquisition of nickel, cobalt, zinc, copper, and iron, and thus enables bacterial growth inside the host, where metal access is limited. Therefore, this enzyme probably contributes to staphylococcal virulence. The reaction is reversible in vitro, the enzyme can produce D-histidine from the L-stereoisomer and vice versa. Appears to be specific for histidine as it cannot use other amino acids as substrate, including L-alanine and L-methionine. This is Histidine racemase from Staphylococcus aureus (strain Mu50 / ATCC 700699).